The following is a 662-amino-acid chain: Hypoxia-inducible factor 3-alpha (662 aa).

Residues 1–25 (MDWDQDRSNTELRKEKSRDAARSRR) form a disordered region. The bHLH domain maps to 12 to 65 (LRKEKSRDAARSRRSQETEVLYQLAHTLPFARGVSAHLDKASIMRLTISYLRMH). Positions 75–98 (QVEKGGEPLDACYLKALEGFVMVL) are nuclear localization signal (isoform 2). PAS domains lie at 80 to 150 (GEPL…PNLS) and 225 to 295 (PHPA…LSKG). A nuclear export signal (isoform 2) region spans residues 228 to 272 (ASLEPPLGRGAFLSRHSLDMKFTYCDERIAEVAGYSPDDLIGCSA). 2 disordered regions span residues 352 to 377 (EQTE…GNSV) and 416 to 446 (PILD…DLPD). The short motif at 414-418 (MAPIL) is the LRRLL element. Residues 426–437 (TPSTPQATRRPQ) are compositionally biased toward low complexity. Residues 448–581 (LTVGLENAHR…SEDKGLELLE (134 aa)) are ODD. Positions 450–501 (VGLENAHRLSTAQKNKTVETDLDIAQDPDTLDLEMLAPYISMDDDFQLNSSE) are NTAD. Residue K463 forms a Glycyl lysine isopeptide (Lys-Gly) (interchain with G-Cter in ubiquitin) linkage. The LAPYISMD motif lies at 485 to 492 (LAPYISMD). P487 bears the 4-hydroxyproline mark. A disordered region spans residues 500 to 595 (SEQLPKVHRR…KRSPRLEPGS (96 aa)). Residues 505 to 521 (KVHRRPPRVARRPRARS) show a composition bias toward basic residues. K565 is covalently cross-linked (Glycyl lysine isopeptide (Lys-Gly) (interchain with G-Cter in ubiquitin)). Positions 572 to 584 (SEDKGLELLETKP) are enriched in basic and acidic residues.

As to quaternary structure, isoform 1 interacts with ARNT. Isoform 2 interacts with HIF1A. Isoform 2 interacts EPAS1. Isoform 2 interacts (via C-terminus domain) with BAD; the interaction reduces the binding between BAD and BAX. Isoform 2 (via C-terminus domain) interacts with BCL2L2 and MCL1. Interacts with VHL. In terms of processing, in normoxia, hydroxylated on Pro-487 in the oxygen-dependent degradation domain (ODD) by PHD. The hydroxylated proline promotes interaction with VHL, initiating rapid ubiquitination and subsequent proteasomal degradation. Post-translationally, ubiquitinated; ubiquitination occurs in a VHL- and oxygen-dependent pathway and subsequently targeted for proteasomal degradation. In terms of tissue distribution, isoform 3 is expressed in endothelial cells of vessels and capillaries in alveoli of the neonatal lung (at protein level). Expressed in lung, brain, heart and kidney. Isoform 2 is expressed in heart and lung. Isoform 2 is highly expressed in the epithelial cell layer of the cornea with lower expression in the layers of ganglion cells, inner nuclear cells, and rods and cones of the retina. Isoform 2 is expressed in the cerebellum only in the Purkinje cell layer.

It is found in the nucleus. The protein resides in the cytoplasm. Its subcellular location is the nucleus speckle. It localises to the mitochondrion. Acts as a transcriptional regulator in adaptive response to low oxygen tension. Acts as a regulator of hypoxia-inducible gene expression. Plays a role in the development of the cardiorespiratory system. Functionally, acts as a positive regulator of hypoxia-inducible gene expression. Associates to core DNA sequence 5'-TACGTG-3' within the hypoxia response element (HRE) of target gene promoters in a ARNT-dependent manner, and hence also participates in the transcriptional activation of reporter genes driven by HRE. Its function is as follows. Attenuates the ability of transcription factor HIF1A, EPAS1 and the HIF1A-ARNT complex to bind to hypoxia-responsive elements (HRE) located within the enhancer/promoter of hypoxia-inducible target genes and hence inhibits HRE-driven transcriptional activation. Functions as an inhibitor of angiogenesis in hypoxic cells of the cornea. May act as a tumor suppressor. May also be involved in apoptosis. In terms of biological role, attenuates the ability of transcription factor HIF1A, EPAS1 and the HIF1A-ARNT complex to bind to hypoxia-responsive elements (HRE) located within the enhancer/promoter of hypoxia-inducible target genes and hence inhibits HRE-driven transcriptional activation. Also plays a role in the development of the lung and heart during embryonic and neonatal stages. This Mus musculus (Mouse) protein is Hypoxia-inducible factor 3-alpha.